Here is a 100-residue protein sequence, read N- to C-terminus: Urease subunit gamma (100 aa).

The protein belongs to the urease gamma subunit family. In terms of assembly, heterotrimer of UreA (gamma), UreB (beta) and UreC (alpha) subunits. Three heterotrimers associate to form the active enzyme.

It is found in the cytoplasm. The catalysed reaction is urea + 2 H2O + H(+) = hydrogencarbonate + 2 NH4(+). The protein operates within nitrogen metabolism; urea degradation; CO(2) and NH(3) from urea (urease route): step 1/1. This chain is Urease subunit gamma, found in Saccharophagus degradans (strain 2-40 / ATCC 43961 / DSM 17024).